The chain runs to 188 residues: 3-deoxy-D-manno-octulosonate 8-phosphate phosphatase KdsC (188 aa).

The Mg(2+) site is built by Asp32 and Asp34. Substrate contacts are provided by residues Asp34, 55–59 (NVRDG), Arg63, Arg78, Arg86, and Lys102. Asp125 contributes to the Mg(2+) binding site.

This sequence belongs to the KdsC family. As to quaternary structure, homotetramer. The cofactor is Mg(2+).

It carries out the reaction 3-deoxy-alpha-D-manno-2-octulosonate-8-phosphate + H2O = 3-deoxy-alpha-D-manno-oct-2-ulosonate + phosphate. It functions in the pathway carbohydrate biosynthesis; 3-deoxy-D-manno-octulosonate biosynthesis; 3-deoxy-D-manno-octulosonate from D-ribulose 5-phosphate: step 3/3. The protein operates within bacterial outer membrane biogenesis; lipopolysaccharide biosynthesis. Functionally, catalyzes the hydrolysis of 3-deoxy-D-manno-octulosonate 8-phosphate (KDO 8-P) to 3-deoxy-D-manno-octulosonate (KDO) and inorganic phosphate. The protein is 3-deoxy-D-manno-octulosonate 8-phosphate phosphatase KdsC of Escherichia coli (strain K12).